The primary structure comprises 328 residues: Gonadotropin-releasing hormone receptor (328 aa).

Topologically, residues 1-38 are extracellular; it reads MANGDSPDQNENHCSAINSSILLTPGSLPTLTLSGKIR. The N-linked (GlcNAc...) asparagine glycan is linked to Asn-18. The chain crosses the membrane as a helical span at residues 39–58; it reads VTVTFFLFLLSTIFNTSFLL. The Cytoplasmic segment spans residues 59–77; sequence KLQNWTQRKEKRKKLSKMK. The chain crosses the membrane as a helical span at residues 78–97; that stretch reads VLLKHLTLANLLETLIVMPL. At 98–115 the chain is on the extracellular side; the sequence is DGMWNITVQWYAGELLCK. N-linked (GlcNAc...) asparagine glycosylation is present at Asn-102. The cysteines at positions 114 and 196 are disulfide-linked. Residues 116–137 traverse the membrane as a helical segment; it reads VLSYLKLFSMYAPAFMMVVISL. At 138–164 the chain is on the cytoplasmic side; it reads DRSLAITRPLAVKSNSKLGQFMIGLAW. A helical membrane pass occupies residues 165–184; it reads LLSSIFAGPQLYIFGMIHLA. Residues 185-212 are Extracellular-facing; that stretch reads DDSGQTEGFSQCVTHCSFPQWWHQAFYN. Residues 213 to 232 traverse the membrane as a helical segment; that stretch reads FFTFSCLFIIPLLIMLICNA. The Cytoplasmic portion of the chain corresponds to 233-281; the sequence is KIIFTLTRVLHQDPHKLQLNQSKNNIPQARLRTLKMTVAFATSFTVCWT. A helical membrane pass occupies residues 282–300; sequence PYYVLGIWYWFDPDMVNRV. At 301–306 the chain is on the extracellular side; the sequence is SDPVNH. Residues 307–326 form a helical membrane-spanning segment; that stretch reads FFFLFAFLNPCFDPLIYGYF. Residues 327–328 are Cytoplasmic-facing; it reads SL.

This sequence belongs to the G-protein coupled receptor 1 family.

The protein localises to the cell membrane. Functionally, receptor for gonadotropin releasing hormone (GnRH) that mediates the action of GnRH to stimulate the secretion of the gonadotropic hormones luteinizing hormone (LH) and follicle-stimulating hormone (FSH). This receptor mediates its action by association with G-proteins that activate a phosphatidylinositol-calcium second messenger system. The sequence is that of Gonadotropin-releasing hormone receptor (GNRHR) from Ovis aries (Sheep).